Reading from the N-terminus, the 267-residue chain is GTP cyclohydrolase MptA (267 aa).

The protein belongs to the GTP cyclohydrolase IV family. Homodimer. The cofactor is Fe(2+).

The catalysed reaction is GTP + H2O = 7,8-dihydroneopterin 2',3'-cyclic phosphate + formate + diphosphate + H(+). It participates in cofactor biosynthesis; 5,6,7,8-tetrahydromethanopterin biosynthesis. In terms of biological role, converts GTP to 7,8-dihydro-D-neopterin 2',3'-cyclic phosphate, the first intermediate in the biosynthesis of coenzyme methanopterin. This Pyrococcus furiosus (strain ATCC 43587 / DSM 3638 / JCM 8422 / Vc1) protein is GTP cyclohydrolase MptA.